We begin with the raw amino-acid sequence, 28 residues long: uncharacterized protein (28 aa).

A helical transmembrane segment spans residues 5-27 (SAFHACNIIFLPLVKCASATIML).

It localises to the membrane. This is an uncharacterized protein from Saccharomyces cerevisiae (strain ATCC 204508 / S288c) (Baker's yeast).